The primary structure comprises 161 residues: Nucleotide-binding protein Bxeno_A3642 (161 aa).

This sequence belongs to the YajQ family.

In terms of biological role, nucleotide-binding protein. This is Nucleotide-binding protein Bxeno_A3642 from Paraburkholderia xenovorans (strain LB400).